Consider the following 144-residue polypeptide: Transmembrane protein 170A (144 aa).

The Extracellular segment spans residues 1 to 50; the sequence is MEREGSGGGGGSAGLLQQILSLKLVPRVGNGTLCPNSTSLCSFPEMWYGV. N-linked (GlcNAc...) asparagine glycosylation is found at Asn30 and Asn36. The helical transmembrane segment at 51–71 threads the bilayer; that stretch reads FLWALMSSVFFHVPAGLLALF. Residues 72–85 are Cytoplasmic-facing; the sequence is TLRHHKYGRFMSVS. The chain crosses the membrane as a helical span at residues 86 to 106; it reads ILLMGIVGPITAGILTSAAIA. At 107 to 116 the chain is on the extracellular side; the sequence is GVYRAAGKEM. Residues 117–137 form a helical membrane-spanning segment; the sequence is IPFEALTLGTGQTFCVVVVSF. Residues 138 to 144 are Cytoplasmic-facing; sequence LRVLATL.

This sequence belongs to the TMEM170 family. In terms of assembly, interacts with RTN4.

The protein resides in the endoplasmic reticulum membrane. Its subcellular location is the nucleus envelope. Acts as a regulator of endoplasmic reticulum (ER) and nuclear envelope (NE) morphogenesis. Affects the ratio between tubular ER and ER sheets by promoting sheet formation at the expense of tubules. Influences NE expansion, nuclear pore complex formation and proper localization of inner nuclear membrane proteins. The polypeptide is Transmembrane protein 170A (Tmem170a) (Mus musculus (Mouse)).